A 201-amino-acid polypeptide reads, in one-letter code: Holliday junction branch migration complex subunit RuvA (201 aa).

The interval 1–64 (MYEYIRGQFQ…EDFIGLYGFT (64 aa)) is domain I. The domain II stretch occupies residues 65-143 (TREELEMFKL…PDELTSEEGE (79 aa)). The flexible linker stretch occupies residues 144–152 (LIEGINDNS). Residues 153–201 (DYSFNINETLSALMALGYTEKEAQKALEKVDKTLSIENMIKESLKLLMR) are domain III.

Belongs to the RuvA family. Homotetramer. Forms an RuvA(8)-RuvB(12)-Holliday junction (HJ) complex. HJ DNA is sandwiched between 2 RuvA tetramers; dsDNA enters through RuvA and exits via RuvB. An RuvB hexamer assembles on each DNA strand where it exits the tetramer. Each RuvB hexamer is contacted by two RuvA subunits (via domain III) on 2 adjacent RuvB subunits; this complex drives branch migration. In the full resolvosome a probable DNA-RuvA(4)-RuvB(12)-RuvC(2) complex forms which resolves the HJ.

Its subcellular location is the cytoplasm. Functionally, the RuvA-RuvB-RuvC complex processes Holliday junction (HJ) DNA during genetic recombination and DNA repair, while the RuvA-RuvB complex plays an important role in the rescue of blocked DNA replication forks via replication fork reversal (RFR). RuvA specifically binds to HJ cruciform DNA, conferring on it an open structure. The RuvB hexamer acts as an ATP-dependent pump, pulling dsDNA into and through the RuvAB complex. HJ branch migration allows RuvC to scan DNA until it finds its consensus sequence, where it cleaves and resolves the cruciform DNA. This chain is Holliday junction branch migration complex subunit RuvA, found in Clostridium perfringens (strain ATCC 13124 / DSM 756 / JCM 1290 / NCIMB 6125 / NCTC 8237 / Type A).